A 543-amino-acid polypeptide reads, in one-letter code: Serendipity locus protein alpha (543 aa).

Its subcellular location is the cytoplasm. It is found in the cell membrane. Its function is as follows. Required for the cellularization of the syncytial blastoderm embryo. Involved in the localization of the actin filaments just prior to and during plasma membrane invagination. Sry-alpha together with nullo and bnk may provide auxiliary functions, by acting both to stabilize a large and dynamic microfilament structure and regulate its functions. The protein is Serendipity locus protein alpha (Sry-alpha) of Drosophila subobscura (Fruit fly).